Here is a 116-residue protein sequence, read N- to C-terminus: Large ribosomal subunit protein bL17 (116 aa).

Belongs to the bacterial ribosomal protein bL17 family. In terms of assembly, part of the 50S ribosomal subunit. Contacts protein L32.

The protein is Large ribosomal subunit protein bL17 of Synechococcus elongatus (strain ATCC 33912 / PCC 7942 / FACHB-805) (Anacystis nidulans R2).